Reading from the N-terminus, the 203-residue chain is Holliday junction branch migration complex subunit RuvA (203 aa).

The segment at methionine 1 to serine 64 is domain I. A domain II region spans residues serine 65–isoleucine 143. The tract at residues alanine 144 to asparagine 150 is flexible linker. Residues leucine 151–serine 203 form a domain III region.

It belongs to the RuvA family. Homotetramer. Forms an RuvA(8)-RuvB(12)-Holliday junction (HJ) complex. HJ DNA is sandwiched between 2 RuvA tetramers; dsDNA enters through RuvA and exits via RuvB. An RuvB hexamer assembles on each DNA strand where it exits the tetramer. Each RuvB hexamer is contacted by two RuvA subunits (via domain III) on 2 adjacent RuvB subunits; this complex drives branch migration. In the full resolvosome a probable DNA-RuvA(4)-RuvB(12)-RuvC(2) complex forms which resolves the HJ.

Its subcellular location is the cytoplasm. Functionally, the RuvA-RuvB-RuvC complex processes Holliday junction (HJ) DNA during genetic recombination and DNA repair, while the RuvA-RuvB complex plays an important role in the rescue of blocked DNA replication forks via replication fork reversal (RFR). RuvA specifically binds to HJ cruciform DNA, conferring on it an open structure. The RuvB hexamer acts as an ATP-dependent pump, pulling dsDNA into and through the RuvAB complex. HJ branch migration allows RuvC to scan DNA until it finds its consensus sequence, where it cleaves and resolves the cruciform DNA. The protein is Holliday junction branch migration complex subunit RuvA of Chlorobium limicola (strain DSM 245 / NBRC 103803 / 6330).